A 425-amino-acid polypeptide reads, in one-letter code: Isocitrate dehydrogenase [NADP] (425 aa).

An NADP(+)-binding site is contributed by Thr-114. The D-threo-isocitrate site is built by Ser-123, Asn-125, Arg-129, Arg-139, and Arg-162. Asp-316 contributes to the Mg(2+) binding site. NADP(+) is bound by residues 348–354 (HGTAPKY), Asn-361, Tyr-400, and Arg-404.

This sequence belongs to the isocitrate and isopropylmalate dehydrogenases family. As to quaternary structure, homodimer. It depends on Mg(2+) as a cofactor. Requires Mn(2+) as cofactor.

It carries out the reaction D-threo-isocitrate + NADP(+) = 2-oxoglutarate + CO2 + NADPH. Its function is as follows. Catalyzes the oxidative decarboxylation of isocitrate to 2-oxoglutarate and carbon dioxide with the concomitant reduction of NADP(+). The polypeptide is Isocitrate dehydrogenase [NADP] (icd) (Helicobacter pylori (strain ATCC 700392 / 26695) (Campylobacter pylori)).